The chain runs to 639 residues: Protein P1 (639 aa).

An N-terminal signal peptide occupies residues 1-20 (MNRFTAYAALFFMFSLCSTA). The next 3 helical transmembrane spans lie at 121–141 (AASV…WTLA), 144–164 (ITLF…LGCI), and 172–192 (ALSL…KIIW). A Peptidase S39 domain is found at 207-399 (VEGYKGFSVP…GITSPNYVFE (193 aa)). Active-site for protease activity residues include H255, D286, and S354. Disordered regions lie at residues 455-515 (ATNA…PPMD) and 539-639 (VSRV…NSKA). Residues 463 to 488 (TAQTNSAEKTAPSTSAEKTALTNKPL) are compositionally biased toward polar residues. Basic residues predominate over residues 548–561 (QKPKQKKRGRRGGK). Positions 566 to 577 (SLPPTSTQSTSG) are enriched in polar residues. Over residues 587–602 (ASGSAGTSRATTTPAP) the composition is skewed to low complexity.

It belongs to the peptidase S39B family. Post-translationally, specific enzymatic cleavages in vivo yield mature proteins. The protease probably cleaves itself and releases the VPg protein. The VPg protein is probably further cleaved in its C-terminus.

It is found in the membrane. Functionally, precursor from which the VPg molecule is probably released at the onset of the RNA synthesis. Essential for virus replication. Participates, together with the proteins P0 and P7, in the inhibition of the induction of aphid-induced host phytohormones. This could play a role in the attraction to the infected plants by aphids. This is Protein P1 from Solanum tuberosum (Potato).